The chain runs to 1394 residues: DNA-directed RNA polymerase subunit beta (1394 aa).

This sequence belongs to the RNA polymerase beta chain family. As to quaternary structure, the RNAP catalytic core consists of 2 alpha, 1 beta, 1 beta' and 1 omega subunit. When a sigma factor is associated with the core the holoenzyme is formed, which can initiate transcription.

It catalyses the reaction RNA(n) + a ribonucleoside 5'-triphosphate = RNA(n+1) + diphosphate. Its function is as follows. DNA-dependent RNA polymerase catalyzes the transcription of DNA into RNA using the four ribonucleoside triphosphates as substrates. The polypeptide is DNA-directed RNA polymerase subunit beta (Anaplasma phagocytophilum (Ehrlichia phagocytophila)).